Reading from the N-terminus, the 374-residue chain is Actin-related protein 2/3 complex subunit 2B (374 aa).

It belongs to the ARPC2 family. In terms of assembly, component of the Arp2/3 complex composed of ARP2, ARP3, ARPC1/p41-ARC, ARPC2/p34-ARC, ARPC3/p21-ARC, ARPC4/p20-ARC and ARPC5/p16-ARC. In terms of tissue distribution, expressed at low levels in all tissues with a relatively highest expression in inflorescences.

The protein resides in the cytoplasm. The protein localises to the cytoskeleton. It localises to the cell projection. Functions as actin-binding component of the Arp2/3 complex which is involved in regulation of actin polymerization and together with an activating nucleation-promoting factor (NPF) mediates the formation of branched actin networks. Seems to contact the mother actin filament. Arp2/3 complex plays a critical role in the control of cell morphogenesis via the modulation of cell polarity development. The sequence is that of Actin-related protein 2/3 complex subunit 2B (ARPC2B) from Arabidopsis thaliana (Mouse-ear cress).